The following is a 251-amino-acid chain: CDP-diacylglycerol pyrophosphatase (251 aa).

The chain crosses the membrane as a helical span at residues A4–W24.

This sequence belongs to the Cdh family.

Its subcellular location is the cell inner membrane. The catalysed reaction is a CDP-1,2-diacyl-sn-glycerol + H2O = a 1,2-diacyl-sn-glycero-3-phosphate + CMP + 2 H(+). It functions in the pathway phospholipid metabolism; CDP-diacylglycerol degradation; phosphatidate from CDP-diacylglycerol: step 1/1. In Shigella flexneri, this protein is CDP-diacylglycerol pyrophosphatase.